Consider the following 382-residue polypeptide: Required for respiratory growth protein 1, mitochondrial (382 aa).

Belongs to the RRG1 family.

The protein localises to the mitochondrion. In terms of biological role, essential for respiratory growth and required for mitochondrial protein synthesis. Required for vacuolar acidification. The sequence is that of Required for respiratory growth protein 1, mitochondrial (RRG1) from Vanderwaltozyma polyspora (strain ATCC 22028 / DSM 70294 / BCRC 21397 / CBS 2163 / NBRC 10782 / NRRL Y-8283 / UCD 57-17) (Kluyveromyces polysporus).